Reading from the N-terminus, the 356-residue chain is Alpha-N-acetylneuraminide alpha-2,8-sialyltransferase (356 aa).

Residues 1–29 are Cytoplasmic-facing; that stretch reads MSPCGRARRQTSRGAMAVLAWKFPRTRLP. A helical; Signal-anchor for type II membrane protein transmembrane segment spans residues 30 to 48; sequence MGASALCVVVLCWLYIFPV. Topologically, residues 49–356 are lumenal; that stretch reads YRLPNEKEIV…CEDTSLQPTS (308 aa). Asn71 and Asn119 each carry an N-linked (GlcNAc...) asparagine glycan. 2 cysteine pairs are disulfide-bonded: Cys138–Cys287 and Cys152–Cys347. CMP-N-acetyl-beta-neuraminate is bound by residues Asn143 and Asn166. N-linked (GlcNAc...) asparagine glycans are attached at residues Asn214 and Asn245. Positions 274, 275, 276, 296, and 310 each coordinate CMP-N-acetyl-beta-neuraminate. The active-site Proton donor/acceptor is the His322.

Belongs to the glycosyltransferase 29 family.

It localises to the golgi apparatus membrane. It carries out the reaction an N-acetyl-alpha-neuraminyl-(2-&gt;3)-beta-D-galactosyl derivative + CMP-N-acetyl-beta-neuraminate = an N-acetyl-alpha-neuraminyl-(2-&gt;8)-N-acetyl-alpha-neuraminyl-(2-&gt;3)-beta-D-galactosyl derivative + CMP + H(+). The catalysed reaction is a ganglioside GM3 (d18:1(4E)) + CMP-N-acetyl-beta-neuraminate = a ganglioside GD3 (d18:1(4E)) + CMP + H(+). It catalyses the reaction a ganglioside GD3 (d18:1(4E)) + CMP-N-acetyl-beta-neuraminate = a ganglioside GT3 (d18:1(4E)) + CMP + H(+). The enzyme catalyses a ganglioside GD1a (d18:1(4E)) + CMP-N-acetyl-beta-neuraminate = a ganglioside GT1a (d18:1(4E)) + CMP + H(+). It carries out the reaction a ganglioside GT1b (d18:1(4E)) + CMP-N-acetyl-beta-neuraminate = a ganglioside GQ1b (d18:1(4E)) + CMP + H(+). The catalysed reaction is a ganglioside GM1b (d18:1(4E)) + CMP-N-acetyl-beta-neuraminate = a ganglioside GD1c (d18:1(4E)) + CMP + H(+). It catalyses the reaction a ganglioside GD3 + CMP-N-acetyl-beta-neuraminate = a ganglioside GT3 + CMP + H(+). The enzyme catalyses [alpha-N-acetylneuraminyl-(2-&gt;8)](n)-alpha-N-acetylneuraminyl-(2-&gt;8)-alpha-N-acetylneuraminyl-(2-&gt;3)-beta-D-galactosyl-(1-&gt;4)-beta-D-glucosyl-(1&lt;-&gt;1)-ceramide + CMP-N-acetyl-beta-neuraminate = [alpha-N-acetylneuraminyl-(2-&gt;8)](n+1)-alpha-N-acetylneuraminyl-(2-&gt;8)-alpha-N-acetylneuraminyl-(2-&gt;3)-beta-D-galactosyl-(1-&gt;4)-beta-D-glucosyl-(1&lt;-&gt;1)-ceramide + CMP + H(+). It functions in the pathway protein modification; protein glycosylation. Its pathway is lipid metabolism; sphingolipid metabolism. Its function is as follows. Catalyzes the addition of sialic acid in alpha 2,8-linkage to the sialic acid moiety of the ganglioside GM3 to form ganglioside GD3; gangliosides are a subfamily of complex glycosphingolipds that contain one or more residues of sialic acid. Can catalyze the addition of a second alpha-2,8- sialic acid to GD3 to form GT3. Can use GM1b, GD1a and GT1b as acceptor substrates to synthesize GD1c, GT1a and GQ1b respectively. The sequence is that of Alpha-N-acetylneuraminide alpha-2,8-sialyltransferase from Pan troglodytes (Chimpanzee).